Reading from the N-terminus, the 367-residue chain is NADH-quinone oxidoreductase subunit H (367 aa).

8 helical membrane-spanning segments follow: residues 19–39 (ALFI…AYLV), 87–107 (ICFL…WAVI), 132–152 (IGVL…IIAG), 178–198 (IGLT…GEIV), 204–224 (MPYW…ISAL), 266–286 (ILIN…PLNI), 291–311 (IIPG…CFIW), and 328–348 (GWKV…SILV).

This sequence belongs to the complex I subunit 1 family. As to quaternary structure, NDH-1 is composed of 14 different subunits. Subunits NuoA, H, J, K, L, M, N constitute the membrane sector of the complex.

The protein localises to the cell inner membrane. It catalyses the reaction a quinone + NADH + 5 H(+)(in) = a quinol + NAD(+) + 4 H(+)(out). NDH-1 shuttles electrons from NADH, via FMN and iron-sulfur (Fe-S) centers, to quinones in the respiratory chain. The immediate electron acceptor for the enzyme in this species is believed to be ubiquinone. Couples the redox reaction to proton translocation (for every two electrons transferred, four hydrogen ions are translocated across the cytoplasmic membrane), and thus conserves the redox energy in a proton gradient. This subunit may bind ubiquinone. This Ehrlichia chaffeensis (strain ATCC CRL-10679 / Arkansas) protein is NADH-quinone oxidoreductase subunit H.